The sequence spans 226 residues: ATP-dependent dethiobiotin synthetase BioD (226 aa).

Gly-12–Val-17 contacts ATP. Residue Thr-16 participates in Mg(2+) binding. Lys-37 is a catalytic residue. Thr-41 is a binding site for substrate. ATP contacts are provided by residues Asp-49, Glu-108 to Gly-111, Gly-169 to Ser-170, and Pro-197 to Gly-199. Residues Asp-49 and Glu-108 each coordinate Mg(2+).

This sequence belongs to the dethiobiotin synthetase family. In terms of assembly, homodimer. It depends on Mg(2+) as a cofactor.

The protein resides in the cytoplasm. The catalysed reaction is (7R,8S)-7,8-diammoniononanoate + CO2 + ATP = (4R,5S)-dethiobiotin + ADP + phosphate + 3 H(+). It functions in the pathway cofactor biosynthesis; biotin biosynthesis; biotin from 7,8-diaminononanoate: step 1/2. In terms of biological role, catalyzes a mechanistically unusual reaction, the ATP-dependent insertion of CO2 between the N7 and N8 nitrogen atoms of 7,8-diaminopelargonic acid (DAPA, also called 7,8-diammoniononanoate) to form a ureido ring. In Mycobacterium tuberculosis (strain ATCC 25177 / H37Ra), this protein is ATP-dependent dethiobiotin synthetase BioD.